Consider the following 148-residue polypeptide: U5-hexatoxin-Hi1a (148 aa).

The N-terminal stretch at 1–21 (MNFSVVAVALVVVLTVHFTDG) is a signal peptide. Positions 22–38 (QETSSSLPSPPSPLPGR) are excised as a propeptide. Residues 125-148 (TPSTTVTTPTPTTETPTTETPSTP) are disordered.

Contains 2 disulfide bonds. Expressed by the venom gland.

The protein localises to the secreted. Functionally, probable ion channel inhibitor. The sequence is that of U5-hexatoxin-Hi1a from Hadronyche infensa (Fraser island funnel-web spider).